Consider the following 388-residue polypeptide: Carbohydrate sulfotransferase 4 (388 aa).

Residues 1-7 (MMLLKKG) are Cytoplasmic-facing. A helical; Signal-anchor for type II membrane protein transmembrane segment spans residues 8 to 28 (RLLMFLGSQVIVVALFIHMSV). Over 29–388 (HRHLSQREES…HILGQVFREG (360 aa)) the chain is Lumenal. Residues 50-56 (WRSGSSF) and 204-212 (RDPRAVFRS) contribute to the 3'-phosphoadenylyl sulfate site. 3 N-linked (GlcNAc...) asparagine glycosylation sites follow: asparagine 307, asparagine 328, and asparagine 369.

It belongs to the sulfotransferase 1 family. Gal/GlcNAc/GalNAc subfamily. In terms of assembly, monomer. In terms of tissue distribution, specifically expressed in high endothelial venules (HEV) of peripheral lymph nodes.

Its subcellular location is the golgi apparatus membrane. The enzyme catalyses 3-O-{N-acetyl-beta-D-glucosaminyl-(1-&gt;3)-beta-D-galactosyl-(1-&gt;3)-N-acetyl-alpha-D-galactosaminyl}-L-threonyl-[protein] + 3'-phosphoadenylyl sulfate = 3-O-{6-O-sulfo-N-acetyl-beta-D-glucosaminyl-(1-&gt;3)-beta-D-galactosyl-(1-&gt;3)-N-acetyl-alpha-D-galactosaminyl}-L-threonyl-[protein] + adenosine 3',5'-bisphosphate + H(+). It catalyses the reaction 3-O-{N-acetyl-beta-D-glucosaminyl-(1-&gt;3)-beta-D-galactosyl-(1-&gt;3)-N-acetyl-alpha-D-galactosaminyl}-L-seryl-[protein] + 3'-phosphoadenylyl sulfate = 3-O-{6-O-sulfo-N-acetyl-beta-D-glucosaminyl-(1-&gt;3)-beta-D-galactosyl-(1-&gt;3)-N-acetyl-alpha-D-galactosaminyl}-L-seryl-[protein] + adenosine 3',5'-bisphosphate + H(+). The catalysed reaction is a 3-O-{beta-D-galactosyl-(1-&gt;3)-[N-acetyl-beta-D-glucosaminyl-(1-&gt;6)]-N-acetyl-alpha-D-galactosaminyl}-L-threonyl-[protein] + 3'-phosphoadenylyl sulfate = 3-O-{beta-D-galactosyl-(1-&gt;3)-[6-O-sulfo-N-acetyl-beta-D-glucosaminyl-(1-&gt;6)]-N-acetyl-alpha-D-galactosaminyl}-L-threonyl-[protein] + adenosine 3',5'-bisphosphate + H(+). It carries out the reaction 3-O-{beta-D-galactosyl-(1-&gt;3)-[N-acetyl-beta-D-glucosaminyl-(1-&gt;6)]-N-acetyl-alpha-D-galactosaminyl}-L-seryl-[protein] + 3'-phosphoadenylyl sulfate = 3-O-{beta-D-galactosyl-(1-&gt;3)-[6-O-sulfo-N-acetyl-beta-D-glucosaminyl-(1-&gt;6)]-N-acetyl-alpha-D-galactosaminyl}-L-seryl-[protein] + adenosine 3',5'-bisphosphate + H(+). It functions in the pathway protein modification; carbohydrate sulfation. Its function is as follows. Sulfotransferase involved in SELL/L-selectin ligand biosynthesis pathway. Catalyzes the transfer of the sulfate group from 3'-phospho-5'-adenylyl sulfate (PAPS) onto the hydroxyl group at C-6 position of the non-reducing N-acetylglucosamine (GlcNAc) residue within O-linked mucin-type glycans. Contributes to generate sialyl 6-sulfo Lewis X determinant (also known as MECA-79 epitope) for SELL recognition, a prerequisite for continuous lymphocyte homing into peripheral lymph nodes and antigen immune surveillance. Transfers the sulfate group primarily on core 2 GlcNAcbeta1-6(Galbeta1-3)GalNAcalphaSer/Thr and extended core 1 GlcNAcbeta1-3Galbeta1-3GalNAcalphaSer/Thr based O-linked glycans on CD34 and GLYCAM1 peripheral node addressins (PNAds) expressed on the lumenal side of high endothelial venules (HEVs). The recognition of PNAds by SELL initiates a multistep process comprising tethering and rolling of blood lymphocytes on HEVs against the blood flow, followed by chemokine signaling, integrin-mediated lymphocyte adhesion onto endothelial cells and lymphocyte transendothelial migration. Modulates rolling velocity and differential T and B lymphocyte recruitment into peripheral lymph nodes, with a major role in B lymphocyte homing. Might be redundant in sulfation of MADCAM1 and lymphocyte trafficking to mesenteric lymph nodes. Can also sulfonate core 3 GlcNAcbeta1-3GalNAc-R based glycans as well as GlcNAcbeta1-3Galbeta1-Glc, GlcNAcbeta1-6ManOMe and GlcNAcbeta1-2Man oligosaccharides, which might be ectopically expressed during tumorigenesis. The polypeptide is Carbohydrate sulfotransferase 4 (Chst4) (Mus musculus (Mouse)).